A 231-amino-acid polypeptide reads, in one-letter code: Small ribosomal subunit protein uS3 (231 aa).

The KH type-2 domain maps to 39–107 (IRKFIKEKLF…QVSVNIVEIK (69 aa)).

It belongs to the universal ribosomal protein uS3 family. Part of the 30S ribosomal subunit. Forms a tight complex with proteins S10 and S14.

Binds the lower part of the 30S subunit head. Binds mRNA in the 70S ribosome, positioning it for translation. In Pelotomaculum thermopropionicum (strain DSM 13744 / JCM 10971 / SI), this protein is Small ribosomal subunit protein uS3.